The chain runs to 481 residues: Serine/threonine-protein kinase US3 (481 aa).

The disordered stretch occupies residues 12 to 63 (RPDKRQEASVPPETNTAPAFPASTFYTPAEDAYLAPGPPETIHPSRPPSPGE). Residues 47 to 61 (PGPPETIHPSRPPSP) show a composition bias toward pro residues. The 288-residue stretch at 191 to 478 (FAIHGALIPG…AAELLRLPLF (288 aa)) folds into the Protein kinase domain. Residues 197-205 (LIPGSEGCV) and K220 contribute to the ATP site. D305 serves as the catalytic Proton acceptor.

This sequence belongs to the protein kinase superfamily. Ser/Thr protein kinase family. As to quaternary structure, interacts with host LAT; this interaction prevents LAT activation of TRAF6. Post-translationally, phosphorylated by UL13; this phosphorylation regulates subsequent phosphorylation of UL31 and UL34 by US3. Autophosphorylated.

Its subcellular location is the host cytoplasm. It is found in the host nucleus. It catalyses the reaction L-seryl-[protein] + ATP = O-phospho-L-seryl-[protein] + ADP + H(+). The enzyme catalyses L-threonyl-[protein] + ATP = O-phospho-L-threonyl-[protein] + ADP + H(+). Multifunctional serine/threonine kinase that plays a role in several processes including egress of virus particles from the nucleus, modulation of the actin cytoskeleton and inhibition of host immune response. Phosphorylates UL31 and UL34, two critical regulators of capsid budding from nucleus to endoplasmic reticulum, thereby facilitating virion egress. Modulates and redistributes host components of the nuclear envelope, including LMNA, emerin/EMD and the nuclear matrix protein MATR3. In turn, facilitates nuclear pore impairment and capsid release through impaired nuclear envelope. Phosphorylates envelope glycoprotein B (gB), probably to direct it to the cell surface. Promotes virus intracellular spread by restructuring host cell cytoskeleton. Blocks host apoptosis to extend cell survival and allow efficient viral replication. Promotes viral gene expression by phosphorylating host HDAC2 to reduce viral genome silencing. Strongly inhibits TCR-activated signal transduction in T-cells by reducing the ubiquitination of LAT and TRAF6, leading to a suboptimal activation of LAT. Subverts host antiviral innate immunity by inhibiting type I interferon production through hyperphosphorylation of beta-catenin/CTNNB1. In addition, phosphorylates the RNA sensor RIGI and the transcription factor IRF3 to prevent the RLR-mediated antiviral signaling pathway. Hyperphosphorylates host RELA and thereby dampens NF-kappa-B signaling. Acts as an immunoevasin partly responsible for inhibition of MR1 expression and antigen presentation in response to bacterial infection. The polypeptide is Serine/threonine-protein kinase US3 (US3) (Human herpesvirus 2 (strain HG52) (HHV-2)).